A 366-amino-acid polypeptide reads, in one-letter code: Aliphatic nitrilase (366 aa).

Residues 8 to 282 (FKVAAVQAQP…EGILYADIDL (275 aa)) enclose the CN hydrolase domain. Glu48 functions as the Proton acceptor in the catalytic mechanism. The active-site Proton donor is the Lys131. The active-site Nucleophile is the Cys165. The tract at residues 346-366 (DEQRALPSTHSDETDRATASI) is disordered. Residues 355 to 366 (HSDETDRATASI) show a composition bias toward basic and acidic residues.

The protein belongs to the carbon-nitrogen hydrolase superfamily. Nitrilase family. In terms of assembly, homodimer.

The enzyme catalyses an aliphatic nitrile + 2 H2O = a carboxylate + NH4(+). The sequence is that of Aliphatic nitrilase (nitA) from Rhodococcus rhodochrous.